Consider the following 142-residue polypeptide: Small ribosomal subunit protein bS18c (142 aa).

A disordered region spans residues 1-21; sequence MDRITGPFRKSKKSFRKPLPP.

Belongs to the bacterial ribosomal protein bS18 family. Part of the 30S ribosomal subunit.

The protein resides in the plastid. In Cuscuta gronovii (Common dodder), this protein is Small ribosomal subunit protein bS18c.